The sequence spans 286 residues: Thymidylate synthase (286 aa).

DUMP is bound at residue Arg-21. Residue Asn-51 participates in (6R)-5,10-methylene-5,6,7,8-tetrahydrofolate binding. A dUMP-binding site is contributed by 150–151 (RR). Cys-170 serves as the catalytic Nucleophile. DUMP-binding positions include 190-193 (RSAD), Asn-201, and 231-233 (HIY). A (6R)-5,10-methylene-5,6,7,8-tetrahydrofolate-binding site is contributed by Asp-193. A (6R)-5,10-methylene-5,6,7,8-tetrahydrofolate-binding site is contributed by Ala-285.

This sequence belongs to the thymidylate synthase family. Bacterial-type ThyA subfamily. In terms of assembly, homodimer.

It is found in the cytoplasm. The enzyme catalyses dUMP + (6R)-5,10-methylene-5,6,7,8-tetrahydrofolate = 7,8-dihydrofolate + dTMP. It participates in pyrimidine metabolism; dTTP biosynthesis. In terms of biological role, catalyzes the reductive methylation of 2'-deoxyuridine-5'-monophosphate (dUMP) to 2'-deoxythymidine-5'-monophosphate (dTMP) while utilizing 5,10-methylenetetrahydrofolate (mTHF) as the methyl donor and reductant in the reaction, yielding dihydrofolate (DHF) as a by-product. This enzymatic reaction provides an intracellular de novo source of dTMP, an essential precursor for DNA biosynthesis. The protein is Thymidylate synthase of Mycoplasmopsis pulmonis (strain UAB CTIP) (Mycoplasma pulmonis).